A 271-amino-acid polypeptide reads, in one-letter code: Bifunctional protein FolD (271 aa).

NADP(+) contacts are provided by residues 154-156 (GRS), serine 181, and isoleucine 222.

It belongs to the tetrahydrofolate dehydrogenase/cyclohydrolase family. In terms of assembly, homodimer.

The catalysed reaction is (6R)-5,10-methylene-5,6,7,8-tetrahydrofolate + NADP(+) = (6R)-5,10-methenyltetrahydrofolate + NADPH. It catalyses the reaction (6R)-5,10-methenyltetrahydrofolate + H2O = (6R)-10-formyltetrahydrofolate + H(+). Its pathway is one-carbon metabolism; tetrahydrofolate interconversion. Catalyzes the oxidation of 5,10-methylenetetrahydrofolate to 5,10-methenyltetrahydrofolate and then the hydrolysis of 5,10-methenyltetrahydrofolate to 10-formyltetrahydrofolate. The protein is Bifunctional protein FolD of Thermotoga sp. (strain RQ2).